A 614-amino-acid chain; its full sequence is Zinc metalloproteinase dpy-31 (614 aa).

Positions Met1 to Gly24 are cleaved as a signal peptide. Residues Tyr25 to Lys150 constitute a propeptide that is removed on maturation. In terms of domain architecture, Peptidase M12A spans Lys150–Ser349. Residue Asn190 is glycosylated (N-linked (GlcNAc...) asparagine). 5 disulfides stabilise this stretch: Cys193/Cys348, Cys216/Cys237, Cys352/Cys372, Cys374/Cys383, and Cys394/Cys422. His245 is a binding site for Zn(2+). Glu246 is a catalytic residue. 2 residues coordinate Zn(2+): His249 and His255. The 41-residue stretch at Asn344–Glu384 folds into the EGF-like domain. Residues Cys394–Leu510 enclose the CUB domain. N-linked (GlcNAc...) asparagine glycosylation occurs at Asn461. Residues Asn513 to Asn562 enclose the TSP type-1 domain. Disulfide bonds link Cys525/Cys556, Cys529/Cys561, and Cys541/Cys546.

Requires Zn(2+) as cofactor.

It localises to the secreted. With respect to regulation, inhibited by marimastat and tripeptide hydroxamic acids. Inhibited by 1,10-phenanthroline. In terms of biological role, metalloprotease which cleaves the carboxyl terminus of procollagens to mature collagens. Probably involved in cuticular collagen maturation. In Teladorsagia circumcincta (Brown stomach worm), this protein is Zinc metalloproteinase dpy-31.